The primary structure comprises 135 residues: U-scoloptoxin(22)-Er1a (135 aa).

Positions 1–24 (MAVILKHLAIILLVFVIEIKMGQG) are cleaved as a signal peptide. Residues 61–135 (PQITFSTDWG…RSPRYLPTII (75 aa)) are disordered. Residues 75 to 127 (SVNEDREAAERERSPQMKRSEHEEQLMAKDEMKRFQEERNPSSDDKIAIDKRS) are compositionally biased toward basic and acidic residues.

It belongs to the scoloptoxin-22 family. Expressed by the venom gland.

The protein localises to the secreted. This chain is U-scoloptoxin(22)-Er1a, found in Ethmostigmus rubripes (Giant centipede).